Consider the following 127-residue polypeptide: Fluoride-specific ion channel FluC (127 aa).

Transmembrane regions (helical) follow at residues 4–24 (IMLA…WLGL), 35–55 (VGTL…LAWF), 71–91 (TGLC…VFLL), and 101–121 (LNVA…FWLF). Na(+)-binding residues include Gly-75 and Thr-78.

It belongs to the fluoride channel Fluc/FEX (TC 1.A.43) family.

It localises to the cell inner membrane. It catalyses the reaction fluoride(in) = fluoride(out). With respect to regulation, na(+) is not transported, but it plays an essential structural role and its presence is essential for fluoride channel function. In terms of biological role, fluoride-specific ion channel. Important for reducing fluoride concentration in the cell, thus reducing its toxicity. The chain is Fluoride-specific ion channel FluC from Cronobacter sakazakii (strain ATCC BAA-894) (Enterobacter sakazakii).